A 216-amino-acid chain; its full sequence is Adenylate kinase (216 aa).

10–15 is a binding site for ATP; the sequence is GAGKGT. The interval 30–59 is NMP; sequence STGDIFRANIKEKTPLGIEAKRYIDNGQLV. Residues Thr31, Arg36, 57–59, 85–88, and Gln92 contribute to the AMP site; these read QLV and GFPR. The LID stretch occupies residues 126-163; sequence GRRVCTSCGASYHIRFNPPKIEGKCDICDNELIQRKDD. Position 127 (Arg127) interacts with ATP. Cys130 and Cys133 together coordinate Zn(2+). ATP is bound at residue 136–137; it reads SY. Residues Cys150 and Cys153 each coordinate Zn(2+). AMP-binding residues include Arg160 and Arg171. Glu199 is a binding site for ATP.

This sequence belongs to the adenylate kinase family. As to quaternary structure, monomer.

It is found in the cytoplasm. It carries out the reaction AMP + ATP = 2 ADP. Its pathway is purine metabolism; AMP biosynthesis via salvage pathway; AMP from ADP: step 1/1. Catalyzes the reversible transfer of the terminal phosphate group between ATP and AMP. Plays an important role in cellular energy homeostasis and in adenine nucleotide metabolism. The polypeptide is Adenylate kinase (Clostridium botulinum (strain ATCC 19397 / Type A)).